Here is a 162-residue protein sequence, read N- to C-terminus: Haemaphysalin (162 aa).

An N-terminal signal peptide occupies residues 1–17 (MHLPATIVFFTCTGVFS). Residue asparagine 57 is glycosylated (N-linked (GlcNAc...) asparagine). Residues 90–145 (CLQPPETGIFDIGWSTYYVYNSRKNMCKPVKKMKFRKTTSKQKNLFNSEEECQQEC) form the BPTI/Kunitz inhibitor domain. 2 disulfides stabilise this stretch: cysteine 90–cysteine 145 and cysteine 116–cysteine 141.

Interacts with host coagulation factor XII (F12) (inactive and activated) (via fibronectin type II domain). Interacts with host high molecular weight kininogen (KNG1) (via amino acids 421-466 and 459-513). Salivary gland.

It is found in the secreted. Zn(2+) modulates binding to host coagulation factor XII (F12) and high molecular weight kininogen (KNG1). Anticoagulant protein. Inhibits activation of host plasma kallikrein-kinin system by interfering with reciprocal activation between coagulation factor XII (F12) and prekallikrein (KLKB1) without affecting their amidolytic activities. The polypeptide is Haemaphysalin (Haemaphysalis longicornis (Bush tick)).